The chain runs to 884 residues: Alanine--tRNA ligase (884 aa).

His572, His576, Cys673, and His677 together coordinate Zn(2+).

The protein belongs to the class-II aminoacyl-tRNA synthetase family. The cofactor is Zn(2+).

Its subcellular location is the cytoplasm. It carries out the reaction tRNA(Ala) + L-alanine + ATP = L-alanyl-tRNA(Ala) + AMP + diphosphate. Functionally, catalyzes the attachment of alanine to tRNA(Ala) in a two-step reaction: alanine is first activated by ATP to form Ala-AMP and then transferred to the acceptor end of tRNA(Ala). Also edits incorrectly charged Ser-tRNA(Ala) and Gly-tRNA(Ala) via its editing domain. The protein is Alanine--tRNA ligase of Xylella fastidiosa (strain 9a5c).